Reading from the N-terminus, the 320-residue chain is TYIDGDKGILLYRGYPIEQLAEKGDFLESCYLLLYGELPTQQEKNDFDRRIMQHTMVHEQFSRFFQGFRRDSHPMAVMVACLGAMSAFYHDSIDITDPQQRMIASIRLISKVPTLAAMAYKYSIGQAFVYPHNSLSYAANFLRMCFAVPCEEYQVNPVLTRAMDRIFILHADHEQNASTSTVRLAGSSGANPFACIAAGVACLWGPAHGGANEACLKMLKEIGSVKKIPEFIARAKDKNDPFRLMGFGHRVYKNYDPRAKIMQKTCHEVLKELNRQDDPLLDIAIELEHIALNDEYFIEKKLYPNVDFYSGITLKALGFP.

Residues histidine 249 and aspartate 307 contribute to the active site.

The protein belongs to the citrate synthase family.

It carries out the reaction oxaloacetate + acetyl-CoA + H2O = citrate + CoA + H(+). It participates in carbohydrate metabolism; tricarboxylic acid cycle; isocitrate from oxaloacetate: step 1/2. This chain is Citrate synthase (gltA), found in Bartonella doshiae.